We begin with the raw amino-acid sequence, 624 residues long: Altered inheritance of mitochondria protein 9, mitochondrial (624 aa).

The N-terminal 34 residues, 1–34 (MLSRVARCSRTLNQVTRNGQSGLFSAVLRTSIRQ), are a transit peptide targeting the mitochondrion.

Belongs to the AIM9 family.

It localises to the mitochondrion. In Candida albicans (strain WO-1) (Yeast), this protein is Altered inheritance of mitochondria protein 9, mitochondrial (AIM9).